Reading from the N-terminus, the 459-residue chain is ATP-dependent protease ATPase subunit HslU (459 aa).

ATP is bound by residues valine 26, glycine 68 to glutamate 73, aspartate 271, glutamate 337, and arginine 409.

The protein belongs to the ClpX chaperone family. HslU subfamily. As to quaternary structure, a double ring-shaped homohexamer of HslV is capped on each side by a ring-shaped HslU homohexamer. The assembly of the HslU/HslV complex is dependent on binding of ATP.

The protein localises to the cytoplasm. In terms of biological role, ATPase subunit of a proteasome-like degradation complex; this subunit has chaperone activity. The binding of ATP and its subsequent hydrolysis by HslU are essential for unfolding of protein substrates subsequently hydrolyzed by HslV. HslU recognizes the N-terminal part of its protein substrates and unfolds these before they are guided to HslV for hydrolysis. This Xylella fastidiosa (strain M23) protein is ATP-dependent protease ATPase subunit HslU.